The primary structure comprises 312 residues: Pantothenate kinase (312 aa).

97–104 (GSVAVGKS) is an ATP binding site.

The protein belongs to the prokaryotic pantothenate kinase family.

The protein localises to the cytoplasm. The enzyme catalyses (R)-pantothenate + ATP = (R)-4'-phosphopantothenate + ADP + H(+). The protein operates within cofactor biosynthesis; coenzyme A biosynthesis; CoA from (R)-pantothenate: step 1/5. The protein is Pantothenate kinase of Mycobacterium marinum (strain ATCC BAA-535 / M).